The primary structure comprises 300 residues: 33 kDa chaperonin (300 aa).

2 disulfides stabilise this stretch: Cys-235-Cys-237 and Cys-269-Cys-272.

This sequence belongs to the HSP33 family. In terms of processing, under oxidizing conditions two disulfide bonds are formed involving the reactive cysteines. Under reducing conditions zinc is bound to the reactive cysteines and the protein is inactive.

It is found in the cytoplasm. Its function is as follows. Redox regulated molecular chaperone. Protects both thermally unfolding and oxidatively damaged proteins from irreversible aggregation. Plays an important role in the bacterial defense system toward oxidative stress. This Pseudomonas syringae pv. tomato (strain ATCC BAA-871 / DC3000) protein is 33 kDa chaperonin.